Here is a 93-residue protein sequence, read N- to C-terminus: Small ribosomal subunit protein uS19 (93 aa).

It belongs to the universal ribosomal protein uS19 family.

Functionally, protein S19 forms a complex with S13 that binds strongly to the 16S ribosomal RNA. The chain is Small ribosomal subunit protein uS19 from Campylobacter lari (strain RM2100 / D67 / ATCC BAA-1060).